Here is a 364-residue protein sequence, read N- to C-terminus: Putative F-box/kelch-repeat protein At1g12170 (364 aa).

One can recognise an F-box domain in the interval 1–50 (MMHVILPWELVEEILYRVPPLSLTRFKIVCKQWNTLFKSKSFVNNHLVRV). Kelch repeat units follow at residues 156 to 205 (SIYN…LNGN) and 328 to 364 (CVYI…IPVP).

The sequence is that of Putative F-box/kelch-repeat protein At1g12170 from Arabidopsis thaliana (Mouse-ear cress).